A 204-amino-acid polypeptide reads, in one-letter code: Terpene cyclase ausL (204 aa).

Transmembrane regions (helical) follow at residues 19–39 (LSEM…LAMV), 49–69 (AIAV…AWIY), 75–95 (HWQG…AATL), 114–134 (LVLL…CLAL), and 138–158 (GALG…SAAV).

The protein belongs to the paxB family.

It is found in the membrane. It functions in the pathway secondary metabolite biosynthesis; terpenoid biosynthesis. Functionally, terpene cyclase; part of the gene cluster B that mediates the biosynthesis of austinol and dehydroaustinol, two fungal meroterpenoids. The first step of the pathway is the synthesis of 3,5-dimethylorsellinic acid by the polyketide synthase ausA. 3,5-dimethylorsellinic acid is then prenylated by the polyprenyl transferase ausN. Further epoxidation by the FAD-dependent monooxygenase ausM and cyclization by the probable terpene cyclase ausL lead to the formation of protoaustinoid A. Protoaustinoid A is then oxidized to spiro-lactone preaustinoid A3 by the combined action of the FAD-binding monooxygenases ausB and ausC, and the dioxygenase ausE. Acid-catalyzed keto-rearrangement and ring contraction of the tetraketide portion of preaustinoid A3 by ausJ lead to the formation of preaustinoid A4. The aldo-keto reductase ausK, with the help of ausH, is involved in the next step by transforming preaustinoid A4 into isoaustinone which is in turn hydroxylated by the P450 monooxygenase ausI to form austinolide. Finally, the cytochrome P450 monooxygenase ausG modifies austinolide to austinol. Austinol can be further modified to dehydroaustinol which forms a diffusible complex with diorcinol that initiates conidiation. Due to genetic rearrangements of the clusters and the subsequent loss of some enzymes, the end products of the Emericella nidulans austinoid biosynthesis clusters are austinol and dehydroaustinol, even if additional enzymes, such as the O-acetyltransferase ausQ and the cytochrome P450 monooxygenase ausR are still functional. In Emericella nidulans (strain FGSC A4 / ATCC 38163 / CBS 112.46 / NRRL 194 / M139) (Aspergillus nidulans), this protein is Terpene cyclase ausL.